The chain runs to 595 residues: NADH-quinone oxidoreductase subunit C/D (595 aa).

Residues 1–185 form an NADH dehydrogenase I subunit C region; sequence MNKNICLSAS…NPFVLTKEKE (185 aa). Residues 209–595 are NADH dehydrogenase I subunit D; sequence DFMFLNFGPN…IDFVMSDVDR (387 aa).

The protein in the N-terminal section; belongs to the complex I 30 kDa subunit family. In the C-terminal section; belongs to the complex I 49 kDa subunit family. As to quaternary structure, NDH-1 is composed of 13 different subunits. Subunits NuoB, CD, E, F, and G constitute the peripheral sector of the complex.

Its subcellular location is the cell inner membrane. The catalysed reaction is a quinone + NADH + 5 H(+)(in) = a quinol + NAD(+) + 4 H(+)(out). Functionally, NDH-1 shuttles electrons from NADH, via FMN and iron-sulfur (Fe-S) centers, to quinones in the respiratory chain. The immediate electron acceptor for the enzyme in this species is believed to be ubiquinone. Couples the redox reaction to proton translocation (for every two electrons transferred, four hydrogen ions are translocated across the cytoplasmic membrane), and thus conserves the redox energy in a proton gradient. The sequence is that of NADH-quinone oxidoreductase subunit C/D from Baumannia cicadellinicola subsp. Homalodisca coagulata.